The chain runs to 34 residues: MSDIN-like toxin proprotein 5 (34 aa).

A propeptide spanning residues 1-10 is cleaved from the precursor; sequence MSDINTARLP. The segment at residues 11 to 20 is a cross-link (cyclopeptide (Tyr-Pro)); it reads YVVFMSFIPP. Residues 21 to 34 constitute a propeptide that is removed on maturation; that stretch reads CVNDDIQVVLTRGE.

Belongs to the MSDIN fungal toxin family. Processed by the macrocyclase-peptidase enzyme POPB to yield a toxic cyclic decapeptide. POPB first removes 10 residues from the N-terminus. Conformational trapping of the remaining peptide forces the enzyme to release this intermediate rather than proceed to macrocyclization. The enzyme rebinds the remaining peptide in a different conformation and catalyzes macrocyclization of the N-terminal 10 residues.

Its function is as follows. Probable toxin that belongs to the MSDIN-like toxin family responsible for a large number of food poisoning cases and deaths. In Amanita bisporigera (Destroying angel), this protein is MSDIN-like toxin proprotein 5.